A 644-amino-acid chain; its full sequence is Complement component C1q receptor (644 aa).

The N-terminal stretch at 1–22 (MAISTGLFLLLGLLGQPWAGAA) is a signal peptide. Residues 23 to 572 (ADSQAVVCEG…SAHSDTDGQN (550 aa)) are Extracellular-facing. The C-type lectin domain occupies 31-173 (EGTACYTAHW…CGTPEAPGNS (143 aa)). A glycan (N-linked (GlcNAc...) asparagine) is linked at Asn102. Intrachain disulfides connect Cys140-Cys164, Cys261-Cys272, Cys268-Cys282, Cys284-Cys297, Cys303-Cys314, Cys308-Cys325, Cys327-Cys340, Cys346-Cys355, Cys351-Cys364, Cys366-Cys380, Cys386-Cys397, Cys393-Cys406, Cys408-Cys422, Cys428-Cys440, Cys436-Cys449, and Cys451-Cys464. 2 consecutive EGF-like domains span residues 257–298 (PKFG…VTCA) and 299–341 (SRNP…VHCV). The N-linked (GlcNAc...) asparagine glycan is linked to Asn322. Residues 342 to 381 (DIDECQDSPCAQDCVNTLGSFHCECWVGYQPSGPKEEACE) enclose the EGF-like 3; calcium-binding domain. The EGF-like 4; calcium-binding domain occupies 382-423 (DVDECAAANSPCAQGCINTDGSFYCSCKEGYIVSGEDSTQCE). The EGF-like 5; calcium-binding domain maps to 424-465 (DIDECSDARGNPCDSLCFNTDGSFRCGCPPGWELAPNGVFCS). The interval 473-508 (LPARPPQKEDNDDRKESTMPPTEMPSSPSGSKDVSN) is disordered. The span at 478 to 489 (PQKEDNDDRKES) shows a compositional bias: basic and acidic residues. Residues 490-501 (TMPPTEMPSSPS) show a composition bias toward low complexity. A helical membrane pass occupies residues 573–593 (LLLFYILGTVVAISLLLVLAL). Topologically, residues 594–644 (GILIYHKRRAKKEEIKEKKPQNAADSYSWVPERAESQAPENQYSPTPGTDC) are cytoplasmic. The segment at 605-644 (KEEIKEKKPQNAADSYSWVPERAESQAPENQYSPTPGTDC) is disordered. Ser619 carries the phosphoserine modification. Phosphotyrosine occurs at positions 620 and 636. Over residues 631–644 (APENQYSPTPGTDC) the composition is skewed to polar residues.

In terms of assembly, homodimer. Interacts with C1QBP; the association may represent a cell surface C1q receptor. Interacts with surfactant protein A/SFTPA1. Interacts with multimerin-2/MMRN2. Interacts with DAG1; this interaction plays an important role in endothelial cell migration. Interacts with CBL. Interacts with IGFBP7. Interacts with VEGFR2. Post-translationally, N- and O-glycosylated. Phosphorylated on Tyr-620 and Tyr-636 by SRC; these phosphorylations promote endothelial cell adhesion and migration. As to expression, expressed in lung, heart and bone marrow. Expressed at lower level in ovary, whole embryo and fetal liver. Not detected in brain, adult liver or thymus. Highly expressed in peritoneal cavity and bone marrow macrophages. Not detected in epithelial cells.

The protein resides in the cell membrane. In terms of biological role, cell surface receptor that plays a role in various physiological processes including inflammation, phagocytosis, and cell adhesion. Plays a role in phagocytosis and enhances the uptake of apoptotic cells and immune complexes by acting as a receptor for defense collagens including surfactant protein A/SFTPA1, C1q, and mannose-binding lectin (MBL2). Plays a role in the regulation of endothelial cell function and adhesion by activating angiogenesis. Mechanistically, exerts its angiogenic function by associating with beta-dystroglycan, leading to SRC-dependent phosphorylation and subsequent recruitment of CBL. In turn, CBL provides a docking site for downstream signaling components, such as CRKL to enhance cell migration. Participates in angiogenesis also by acting as a receptor for the ECM pan-endothelial glycoprotein multimerin-2/MMRN2 and IGFBP7 ligands. Both ligands play a non-redundant role in CD93-mediated endothelial cell function. Acts as a key regulator of endothelial barrier function through modulating VEGFR2 function. In Mus musculus (Mouse), this protein is Complement component C1q receptor (Cd93).